The chain runs to 239 residues: 2,3,4,5-tetrahydropyridine-2,6-dicarboxylate N-acetyltransferase (239 aa).

The protein belongs to the transferase hexapeptide repeat family. DapH subfamily.

The enzyme catalyses (S)-2,3,4,5-tetrahydrodipicolinate + acetyl-CoA + H2O = L-2-acetamido-6-oxoheptanedioate + CoA. Its pathway is amino-acid biosynthesis; L-lysine biosynthesis via DAP pathway; LL-2,6-diaminopimelate from (S)-tetrahydrodipicolinate (acetylase route): step 1/3. Catalyzes the transfer of an acetyl group from acetyl-CoA to tetrahydrodipicolinate. The chain is 2,3,4,5-tetrahydropyridine-2,6-dicarboxylate N-acetyltransferase from Staphylococcus aureus (strain MRSA252).